The following is a 508-amino-acid chain: Photosystem II CP47 reaction center protein (508 aa).

The next 6 helical transmembrane spans lie at 21-36, 101-115, 140-156, 203-218, 237-252, and 457-472; these read SVHIMHTALVSGWAGS, IMLSGLCFLAAIWHW, GIHLFLAGVACFGFGAF, IAAGTLGILAGLFHLS, VLSSSIAAVFFAAFVV, and SFALLFFFGHIWHGAR.

This sequence belongs to the PsbB/PsbC family. PsbB subfamily. As to quaternary structure, PSII is composed of 1 copy each of membrane proteins PsbA, PsbB, PsbC, PsbD, PsbE, PsbF, PsbH, PsbI, PsbJ, PsbK, PsbL, PsbM, PsbT, PsbX, PsbY, PsbZ, Psb30/Ycf12, at least 3 peripheral proteins of the oxygen-evolving complex and a large number of cofactors. It forms dimeric complexes. Binds multiple chlorophylls. PSII binds additional chlorophylls, carotenoids and specific lipids. serves as cofactor.

Its subcellular location is the plastid. It is found in the chloroplast thylakoid membrane. Functionally, one of the components of the core complex of photosystem II (PSII). It binds chlorophyll and helps catalyze the primary light-induced photochemical processes of PSII. PSII is a light-driven water:plastoquinone oxidoreductase, using light energy to abstract electrons from H(2)O, generating O(2) and a proton gradient subsequently used for ATP formation. The polypeptide is Photosystem II CP47 reaction center protein (Piper cenocladum (Ant piper)).